The sequence spans 283 residues: MKQSFSRLFGLNDKNDDAELTANEEVQQLAIKDIVPNRFQPRTLFDEDRIAELAQTIRTHGVIQPIVVRVRDDKYEIIAGERRWRAVTSLQWETIPAIVKEFNDSQTASIALIENLQREGLTAIEEATAYAKLIEIHNLTQESLAQRLGKGQSTIANKLRLLHLPQAVQDAILNRDISERHARALIALKDAEAQEAVLKQIIEEQLNVKQTEERVKAYFKTAEEEAPKKKKPKRKSYPKDMRIAMNTIRQSVDMVMKSGLKVDTDEEDNEEFYQFTIRIPKKK.

A DNA-binding region (H-T-H motif) is located at residues glutamate 142–leucine 161.

It belongs to the ParB family.

It is found in the cytoplasm. The protein localises to the nucleoid. Functionally, effects nucleoid occlusion by binding relatively nonspecifically to DNA and preventing the assembly of the division machinery in the vicinity of the nucleoid, especially under conditions that disturb the cell cycle. It helps to coordinate cell division and chromosome segregation by preventing the formation of the Z ring through the nucleoid, which would cause chromosome breakage. This Shouchella clausii (strain KSM-K16) (Alkalihalobacillus clausii) protein is Nucleoid occlusion protein.